The following is a 277-amino-acid chain: 5'-nucleotidase SurE (277 aa).

Residues D14, D15, S46, and N104 each coordinate a divalent metal cation.

Belongs to the SurE nucleotidase family. It depends on a divalent metal cation as a cofactor.

It localises to the cytoplasm. The catalysed reaction is a ribonucleoside 5'-phosphate + H2O = a ribonucleoside + phosphate. Functionally, nucleotidase that shows phosphatase activity on nucleoside 5'-monophosphates. This chain is 5'-nucleotidase SurE, found in Picosynechococcus sp. (strain ATCC 27264 / PCC 7002 / PR-6) (Agmenellum quadruplicatum).